The sequence spans 135 residues: 30 kDa antigenic glycoprotein (135 aa).

Positions 1 to 5 (GNTYS) are cleaved as a signal peptide. Asn22, Asn31, Asn57, and Asn73 each carry an N-linked (GlcNAc...) asparagine glycan.

This sequence to H.contortus 15 kDa excretory/secretory protein.

The protein resides in the secreted. The chain is 30 kDa antigenic glycoprotein from Trichostrongylus colubriformis (Black scour worm).